The sequence spans 729 residues: Monosaccharide-sensing protein 3 (729 aa).

6 helical membrane passes run Val-5–Ile-25, Gly-46–Val-66, Val-81–Phe-101, Leu-104–Thr-124, Thr-135–Met-155, and Leu-165–Leu-185. The segment at Gln-337–Tyr-372 is disordered. A compositionally biased stretch (polar residues) spans Asn-356–Thr-367. Ser-446 carries the post-translational modification Phosphoserine. 6 helical membrane-spanning segments follow: residues Ala-511–Met-531, Ala-557–Met-577, Met-581–Val-601, Leu-610–Ile-630, Ile-650–Leu-670, and Ile-673–Val-693.

It belongs to the major facilitator superfamily. Sugar transporter (TC 2.A.1.1) family. As to expression, weakly expressed.

It is found in the vacuole membrane. It carries out the reaction D-glucose(out) + H(+)(in) = D-glucose(in) + H(+)(out). It catalyses the reaction sucrose(out) + H(+)(in) = sucrose(in) + H(+)(out). Functionally, sugar proton-coupled antiporter which contributes to vacuolar sugar import (e.g. monosaccharides including glucose,sucrose and fructose), particularly during stress responses (e.g. in response to cold). The chain is Monosaccharide-sensing protein 3 from Arabidopsis thaliana (Mouse-ear cress).